A 284-amino-acid chain; its full sequence is Small ribosomal subunit protein uS2 (284 aa).

The segment covering 250 to 272 (QELLAGATASPTAAGAAPGTPEA) has biased composition (low complexity). The segment at 250 to 284 (QELLAGATASPTAAGAAPGTPEADIQTEPTAPQNP) is disordered.

The protein belongs to the universal ribosomal protein uS2 family.

The sequence is that of Small ribosomal subunit protein uS2 from Mycobacterium sp. (strain KMS).